A 437-amino-acid polypeptide reads, in one-letter code: Nicotinate phosphoribosyltransferase (437 aa).

His231 carries the post-translational modification Phosphohistidine; by autocatalysis.

The protein belongs to the NAPRTase family. In terms of processing, transiently phosphorylated on a His residue during the reaction cycle. Phosphorylation strongly increases the affinity for substrates and increases the rate of nicotinate D-ribonucleotide production. Dephosphorylation regenerates the low-affinity form of the enzyme, leading to product release.

The enzyme catalyses nicotinate + 5-phospho-alpha-D-ribose 1-diphosphate + ATP + H2O = nicotinate beta-D-ribonucleotide + ADP + phosphate + diphosphate. The protein operates within cofactor biosynthesis; NAD(+) biosynthesis; nicotinate D-ribonucleotide from nicotinate: step 1/1. Its function is as follows. Catalyzes the synthesis of beta-nicotinate D-ribonucleotide from nicotinate and 5-phospho-D-ribose 1-phosphate at the expense of ATP. In Vibrio vulnificus (strain CMCP6), this protein is Nicotinate phosphoribosyltransferase.